The primary structure comprises 1240 residues: Phospholipid-transporting ATPase 6 (1240 aa).

Over 1 to 75 the chain is Cytoplasmic; sequence MARRRIRSRI…TTRYNLLTFL (75 aa). The chain crosses the membrane as a helical span at residues 76–97; that stretch reads PKCLYEQFHRVANFYFLVAAIL. Residues 98-101 lie on the Extracellular side of the membrane; it reads SVFP. A helical membrane pass occupies residues 102-124; that stretch reads LSPFNKWSMIAPLVFVVGLSMGK. Topologically, residues 125-306 are cytoplasmic; it reads EALEDWRRFM…SRIEKRMDYI (182 aa). The chain crosses the membrane as a helical span at residues 307–328; sequence IYTLFALLLTVSFISSLGFAVM. The Extracellular portion of the chain corresponds to 329–360; that stretch reads TKLLMAEWWYLRPDKPESLTNPTNPLYAWVVH. Residues 361–378 traverse the membrane as a helical segment; sequence LITALLLYGYLIPISLYV. The Cytoplasmic segment spans residues 379-943; sequence SIEVVKVLQA…HGHWCYKRIA (565 aa). Catalysis depends on D426, which acts as the 4-aspartylphosphate intermediate. A Glycyl lysine isopeptide (Lys-Gly) (interchain with G-Cter in ubiquitin) cross-link involves residue K625. D888 and D892 together coordinate Mg(2+). The helical transmembrane segment at 944 to 963 threads the bilayer; the sequence is QMICYFFYKNITFGLTLFYF. Residues 964 to 977 are Extracellular-facing; the sequence is ECFTGFSGQSIYND. A helical membrane pass occupies residues 978-997; the sequence is SYLLLFNVVLTSLPVISLGV. Over 998 to 1027 the chain is Cytoplasmic; that stretch reads FEQDVPSDVCLQFPALYQQGPKNLFFDWYR. The helical transmembrane segment at 1028-1050 threads the bilayer; sequence ILGWMGNGVYASIVIFTLNLGIF. The Extracellular portion of the chain corresponds to 1051 to 1063; that stretch reads HVQSFRSDGQTAD. Residues 1064–1086 traverse the membrane as a helical segment; the sequence is MNAMGTAMFTCIIWAVNVQIALT. Residues 1087 to 1092 lie on the Cytoplasmic side of the membrane; the sequence is MSHFTW. Residues 1093-1113 traverse the membrane as a helical segment; that stretch reads IQHVMIWGSIGAWYVFLALYG. Residues 1114–1130 lie on the Extracellular side of the membrane; the sequence is MLPVKLSGNIFHMLVEI. A helical transmembrane segment spans residues 1131 to 1155; that stretch reads LAPAPIFWLTSLLVIAATTLPYLFH. Over 1156 to 1240 the chain is Cytoplasmic; the sequence is ISYQRSVNPL…SNDTPSSNSQ (85 aa).

The protein belongs to the cation transport ATPase (P-type) (TC 3.A.3) family. Type IV subfamily.

The protein resides in the cell membrane. It localises to the endomembrane system. The catalysed reaction is ATP + H2O + phospholipidSide 1 = ADP + phosphate + phospholipidSide 2.. Involved in transport of phospholipids and in regulation of pollen plasma membrane lipid asymmetry. The sequence is that of Phospholipid-transporting ATPase 6 from Arabidopsis thaliana (Mouse-ear cress).